The following is a 236-amino-acid chain: Phosphoribosylaminoimidazole-succinocarboxamide synthase (236 aa).

The protein belongs to the SAICAR synthetase family.

The catalysed reaction is 5-amino-1-(5-phospho-D-ribosyl)imidazole-4-carboxylate + L-aspartate + ATP = (2S)-2-[5-amino-1-(5-phospho-beta-D-ribosyl)imidazole-4-carboxamido]succinate + ADP + phosphate + 2 H(+). It functions in the pathway purine metabolism; IMP biosynthesis via de novo pathway; 5-amino-1-(5-phospho-D-ribosyl)imidazole-4-carboxamide from 5-amino-1-(5-phospho-D-ribosyl)imidazole-4-carboxylate: step 1/2. The protein is Phosphoribosylaminoimidazole-succinocarboxamide synthase of Campylobacter jejuni subsp. jejuni serotype O:2 (strain ATCC 700819 / NCTC 11168).